Here is a 483-residue protein sequence, read N- to C-terminus: Protein disulfide-isomerase 5-3 (483 aa).

N-linked (GlcNAc...) asparagine glycans are attached at residues Asn53, Asn74, and Asn99. The Thioredoxin domain occupies 133–263; that stretch reads EETKEEFPDG…IVKMVEGLVA (131 aa). Cys170 acts as the Nucleophile in catalysis. 3 N-linked (GlcNAc...) asparagine glycosylation sites follow: Asn279, Asn326, and Asn376. Residues 442 to 462 form a helical membrane-spanning segment; the sequence is FSHFITNLCAIIGGVFTVAGI.

The protein belongs to the protein disulfide isomerase family. Widely expressed.

Its subcellular location is the membrane. Its function is as follows. Acts as a protein-folding catalyst that interacts with nascent polypeptides to catalyze the formation, isomerization, and reduction or oxidation of disulfide bonds. This Arabidopsis thaliana (Mouse-ear cress) protein is Protein disulfide-isomerase 5-3 (PDIL5-3).